Consider the following 110-residue polypeptide: Phosphoribosyl-ATP pyrophosphatase (110 aa).

Belongs to the PRA-PH family.

It localises to the cytoplasm. The catalysed reaction is 1-(5-phospho-beta-D-ribosyl)-ATP + H2O = 1-(5-phospho-beta-D-ribosyl)-5'-AMP + diphosphate + H(+). It participates in amino-acid biosynthesis; L-histidine biosynthesis; L-histidine from 5-phospho-alpha-D-ribose 1-diphosphate: step 2/9. The chain is Phosphoribosyl-ATP pyrophosphatase from Clostridium botulinum (strain Kyoto / Type A2).